A 32-amino-acid polypeptide reads, in one-letter code: Cytochrome b6-f complex subunit 7 (32 aa).

The helical transmembrane segment at F5–A25 threads the bilayer.

It belongs to the PetM family. As to quaternary structure, the 4 large subunits of the cytochrome b6-f complex are cytochrome b6, subunit IV (17 kDa polypeptide, PetD), cytochrome f and the Rieske protein, while the 4 small subunits are PetG, PetL, PetM and PetN. The complex functions as a dimer.

The protein localises to the plastid. It is found in the chloroplast thylakoid membrane. Component of the cytochrome b6-f complex, which mediates electron transfer between photosystem II (PSII) and photosystem I (PSI), cyclic electron flow around PSI, and state transitions. This chain is Cytochrome b6-f complex subunit 7, found in Guillardia theta (Cryptophyte).